Here is a 384-residue protein sequence, read N- to C-terminus: N-acetyldiaminopimelate deacetylase (384 aa).

Residue Asp-73 is part of the active site. Glu-132 serves as the catalytic Proton acceptor.

This sequence belongs to the peptidase M20A family. N-acetyldiaminopimelate deacetylase subfamily.

The catalysed reaction is N-acetyl-(2S,6S)-2,6-diaminopimelate + H2O = (2S,6S)-2,6-diaminopimelate + acetate. The protein operates within amino-acid biosynthesis; L-lysine biosynthesis via DAP pathway; LL-2,6-diaminopimelate from (S)-tetrahydrodipicolinate (acetylase route): step 3/3. In terms of biological role, catalyzes the conversion of N-acetyl-diaminopimelate to diaminopimelate and acetate. The polypeptide is N-acetyldiaminopimelate deacetylase (Limosilactobacillus fermentum (strain NBRC 3956 / LMG 18251) (Lactobacillus fermentum)).